Consider the following 947-residue polypeptide: Bifunctional glutamine synthetase adenylyltransferase/adenylyl-removing enzyme (947 aa).

The tract at residues 1–440 is adenylyl removase; sequence MTPLSSPLRQ…VFNELIGDDE (440 aa). The segment at 450 to 947 is adenylyl transferase; sequence SEPWREVWQD…ASWRKWLVAV (498 aa).

It belongs to the GlnE family. Mg(2+) is required as a cofactor.

The catalysed reaction is [glutamine synthetase]-O(4)-(5'-adenylyl)-L-tyrosine + phosphate = [glutamine synthetase]-L-tyrosine + ADP. It carries out the reaction [glutamine synthetase]-L-tyrosine + ATP = [glutamine synthetase]-O(4)-(5'-adenylyl)-L-tyrosine + diphosphate. Functionally, involved in the regulation of glutamine synthetase GlnA, a key enzyme in the process to assimilate ammonia. When cellular nitrogen levels are high, the C-terminal adenylyl transferase (AT) inactivates GlnA by covalent transfer of an adenylyl group from ATP to specific tyrosine residue of GlnA, thus reducing its activity. Conversely, when nitrogen levels are low, the N-terminal adenylyl removase (AR) activates GlnA by removing the adenylyl group by phosphorolysis, increasing its activity. The regulatory region of GlnE binds the signal transduction protein PII (GlnB) which indicates the nitrogen status of the cell. The polypeptide is Bifunctional glutamine synthetase adenylyltransferase/adenylyl-removing enzyme (Salmonella arizonae (strain ATCC BAA-731 / CDC346-86 / RSK2980)).